A 505-amino-acid polypeptide reads, in one-letter code: Flagellin (505 aa).

The protein belongs to the bacterial flagellin family.

It localises to the secreted. It is found in the bacterial flagellum. Its function is as follows. Flagellin is the subunit protein which polymerizes to form the filaments of bacterial flagella. The protein is Flagellin (fliC) of Salmonella budapest.